The chain runs to 173 residues: Probable capsid assembly scaffolding protein (173 aa).

Residues 1-30 (MSDTATTEGTPAGDPTPVVTDKPLEPTPKT) are disordered. Residues 36-56 (VKELRQEAAAARVAKKDAVEA) are a coiled coil.

This sequence belongs to the L5likevirus scaffolding protein family.

Scaffolding protein involved in the icosahedric procapsid assembly. Coassembles with the capsid proteins to form the procapsid, in which the scaffolding protein is found within the external shell of icosahedrally arranged capsid protein subunits. The polypeptide is Probable capsid assembly scaffolding protein (16) (Mycobacterium (Mycobacteriophage D29)).